A 712-amino-acid chain; its full sequence is Polyribonucleotide nucleotidyltransferase (712 aa).

Mg(2+)-binding residues include Asp487 and Asp493. Residues 554–613 (PRIHTMKISVEKIKDVIGKGGAVIRQLTEETGTTIEIEDDGTIKIAATDGDQAKEAIRRI) form the KH domain. An S1 motif domain is found at 623 to 691 (GVIYTGKVAR…RQGRVRLSMK (69 aa)).

The protein belongs to the polyribonucleotide nucleotidyltransferase family. Component of the RNA degradosome, which is a multiprotein complex involved in RNA processing and mRNA degradation. Mg(2+) is required as a cofactor.

The protein localises to the cytoplasm. The enzyme catalyses RNA(n+1) + phosphate = RNA(n) + a ribonucleoside 5'-diphosphate. In terms of biological role, involved in mRNA degradation. Catalyzes the phosphorolysis of single-stranded polyribonucleotides processively in the 3'- to 5'-direction. This Vibrio cholerae serotype O1 (strain ATCC 39541 / Classical Ogawa 395 / O395) protein is Polyribonucleotide nucleotidyltransferase.